Consider the following 244-residue polypeptide: uncharacterized protein (244 aa).

The WGR domain occupies 1-78 (MKKRFIYHDE…PKFNFMDRYY (78 aa)).

This is an uncharacterized protein from Escherichia coli (strain K12).